The following is a 774-amino-acid chain: Subtilisin-like protease SBT3.5 (774 aa).

The signal sequence occupies residues 1–23 (MRNCRVLLVLVLSLVIVLNVVRA). The propeptide at 24–108 (SDESKVHIVY…VMADSFYELA (85 aa)) is removed in mature form. Residues 29–108 (VHIVYLGEKQ…VMADSFYELA (80 aa)) enclose the Inhibitor I9 domain. Positions 112–621 (TWDYLGLSVA…GGIVNPEKAA (510 aa)) constitute a Peptidase S8 domain. N-linked (GlcNAc...) asparagine glycosylation is present at N128. D142 acts as the Charge relay system in catalysis. Residue N201 is glycosylated (N-linked (GlcNAc...) asparagine). Catalysis depends on H217, which acts as the Charge relay system. 4 N-linked (GlcNAc...) asparagine glycosylation sites follow: N232, N394, N409, and N539. One can recognise a PA domain in the interval 383-478 (SLVYPENAGF…ELGTDVLLYI (96 aa)). S552 (charge relay system) is an active-site residue. N644, N654, N725, and N755 each carry an N-linked (GlcNAc...) asparagine glycan.

It belongs to the peptidase S8 family. Expressed in roots, leaves, stems, flower buds, developing siliques and mature seeds.

Its subcellular location is the secreted. The protein resides in the cell wall. In terms of biological role, serine protease that cleaves the pectin methylesterase 17 (PME17) protein to release the PME17 mature form in the apoplasm. The sequence is that of Subtilisin-like protease SBT3.5 from Arabidopsis thaliana (Mouse-ear cress).